The sequence spans 348 residues: Small ribosomal subunit biogenesis GTPase RsgA (348 aa).

Basic residues predominate over residues 1-14 (MAKRKLSKQQKWRI). A disordered region spans residues 1–39 (MAKRKLSKQQKWRIQKIQDERTKRATRKETQLESQLSGG). Residues 16–31 (KIQDERTKRATRKETQ) are compositionally biased toward basic and acidic residues. The CP-type G domain occupies 116-275 (FGQLKPIAAN…LIDSPGIREF (160 aa)). GTP-binding positions include 163-166 (NKQD) and 217-225 (GQSGVGKSS). The Zn(2+) site is built by Cys-299, Cys-304, His-306, and Cys-312.

It belongs to the TRAFAC class YlqF/YawG GTPase family. RsgA subfamily. As to quaternary structure, monomer. Associates with 30S ribosomal subunit, binds 16S rRNA. The cofactor is Zn(2+).

The protein localises to the cytoplasm. One of several proteins that assist in the late maturation steps of the functional core of the 30S ribosomal subunit. Helps release RbfA from mature subunits. May play a role in the assembly of ribosomal proteins into the subunit. Circularly permuted GTPase that catalyzes slow GTP hydrolysis, GTPase activity is stimulated by the 30S ribosomal subunit. The protein is Small ribosomal subunit biogenesis GTPase RsgA of Hahella chejuensis (strain KCTC 2396).